Here is a 603-residue protein sequence, read N- to C-terminus: Extracellular basic protease (603 aa).

Residues 1-21 form the signal peptide; sequence MNLSNISAVKVLTLVVSAAIA. Residues 22–132 constitute a propeptide that is removed on maturation; the sequence is GQVCAAESIV…VEVDRLAYPK (111 aa). A Peptidase S8 domain is found at 143–468; sequence QWHYFGNYGV…SGIVDANAAV (326 aa). Asp173 serves as the catalytic Charge relay system. The interval 197-221 is disordered; that stretch reads PNARDGDQRDNNPADEGDWFDNWDC. Cystine bridges form between Cys221–Cys273 and Cys315–Cys352. Catalysis depends on His237, which acts as the Charge relay system. Ser409 acts as the Charge relay system in catalysis. A propeptide spanning residues 477 to 603 is cleaved from the precursor; it reads RAQPRPPVNQ…GSIDSWSLTF (127 aa). The P/Homo B domain occupies 478–603; that stretch reads AQPRPPVNQP…GSIDSWSLTF (126 aa).

It belongs to the peptidase S8 family.

The protein localises to the secreted. The polypeptide is Extracellular basic protease (bprV) (Dichelobacter nodosus (Bacteroides nodosus)).